The following is a 96-amino-acid chain: Protein S100-A10 (96 aa).

An N6-acetyllysine mark is found at K23 and K28. N6-acetyllysine; alternate is present on K37. Residue K37 forms a Glycyl lysine isopeptide (Lys-Gly) (interchain with G-Cter in SUMO2); alternate linkage. N6-acetyllysine is present on residues K54 and K57. An ancestral calcium site region spans residues 60-71; that stretch reads DQCRDGKVGFQS.

The protein belongs to the S-100 family. As to quaternary structure, heterotetramer containing 2 light chains of S100A10/p11 and 2 heavy chains of ANXA2/p36. Interacts with SCN10A. Interacts with TASOR.

Its function is as follows. Because S100A10 induces the dimerization of ANXA2/p36, it may function as a regulator of protein phosphorylation in that the ANXA2 monomer is the preferred target (in vitro) of tyrosine-specific kinase. This chain is Protein S100-A10 (S100A10), found in Sus scrofa (Pig).